Here is a 922-residue protein sequence, read N- to C-terminus: Lacticin 481/lactococcin biosynthesis protein LcnDR2 (922 aa).

Could be implicated in the processing or the export process of the lantibiotic lacticin 481/lactococcin DR. The polypeptide is Lacticin 481/lactococcin biosynthesis protein LcnDR2 (lcnDR2) (Lactococcus lactis subsp. lactis (Streptococcus lactis)).